The primary structure comprises 293 residues: 4-hydroxy-tetrahydrodipicolinate synthase (293 aa).

Residue Thr45 coordinates pyruvate. Tyr133 (proton donor/acceptor) is an active-site residue. Lys161 functions as the Schiff-base intermediate with substrate in the catalytic mechanism. Ile204 is a binding site for pyruvate.

The protein belongs to the DapA family. Homotetramer; dimer of dimers.

The protein resides in the cytoplasm. It carries out the reaction L-aspartate 4-semialdehyde + pyruvate = (2S,4S)-4-hydroxy-2,3,4,5-tetrahydrodipicolinate + H2O + H(+). It functions in the pathway amino-acid biosynthesis; L-lysine biosynthesis via DAP pathway; (S)-tetrahydrodipicolinate from L-aspartate: step 3/4. Functionally, catalyzes the condensation of (S)-aspartate-beta-semialdehyde [(S)-ASA] and pyruvate to 4-hydroxy-tetrahydrodipicolinate (HTPA). The sequence is that of 4-hydroxy-tetrahydrodipicolinate synthase from Yersinia pseudotuberculosis serotype I (strain IP32953).